Here is a 220-residue protein sequence, read N- to C-terminus: Gene 32 protein (220 aa).

A disordered region spans residues 184 to 205 (NSAGGNGNAPGGGGAGAQVSAQ). Residues 187–199 (GGNGNAPGGGGAG) show a composition bias toward gly residues.

This Mycobacterium (Mycobacteriophage L5) protein is Gene 32 protein (32).